Consider the following 270-residue polypeptide: Proteasome subunit beta (270 aa).

The propeptide at 1–47 (MSNRGRLGDAFLRPGSSSFLDFLSDHAPELLPGRSAAAGNAPLAPHA) is removed in mature form; by autocatalysis. The active-site Nucleophile is Thr-48.

This sequence belongs to the peptidase T1B family. As to quaternary structure, the 20S proteasome core is composed of 14 alpha and 14 beta subunits that assemble into four stacked heptameric rings, resulting in a barrel-shaped structure. The two inner rings, each composed of seven catalytic beta subunits, are sandwiched by two outer rings, each composed of seven alpha subunits. The catalytic chamber with the active sites is on the inside of the barrel. Has a gated structure, the ends of the cylinder being occluded by the N-termini of the alpha-subunits. Is capped by the proteasome-associated ATPase, ARC.

The protein resides in the cytoplasm. It catalyses the reaction Cleavage of peptide bonds with very broad specificity.. The protein operates within protein degradation; proteasomal Pup-dependent pathway. The formation of the proteasomal ATPase ARC-20S proteasome complex, likely via the docking of the C-termini of ARC into the intersubunit pockets in the alpha-rings, may trigger opening of the gate for substrate entry. Interconversion between the open-gate and close-gate conformations leads to a dynamic regulation of the 20S proteasome proteolysis activity. Functionally, component of the proteasome core, a large protease complex with broad specificity involved in protein degradation. This chain is Proteasome subunit beta, found in Xylanimonas cellulosilytica (strain DSM 15894 / JCM 12276 / CECT 5975 / KCTC 9989 / LMG 20990 / NBRC 107835 / XIL07).